The sequence spans 503 residues: Basic immunoglobulin-like variable motif-containing protein (503 aa).

A compositionally biased stretch (basic and acidic residues) spans 1–26 (MPNVAETERSNDSGNGEHKSERKSPE). Disordered stretches follow at residues 1–33 (MPNV…QGAV), 152–184 (TTNS…ECPQ), and 438–469 (ESQP…GRSF). Positions 155–172 (SKHKSGNAKKQVSKRKTS) are enriched in basic residues. Basic and acidic residues predominate over residues 173–184 (DKKGRYQKECPQ).

This sequence belongs to the BIVM family. In terms of tissue distribution, widely expressed. Expressed at higher level in spleen, ovary, small intestine, colon, peripheral blood leukocytes and liver. Also expressed in testis, ovary, aorta, appendix, trachea, pituitary gland, bladder, uterus, spinal cord, salivary gland, stomach, mammary gland and bone marrow. Weakly or not expressed in fetal spleen, adult thymus and certain cancer cell lines.

It is found in the cytoplasm. The protein localises to the nucleus. This Homo sapiens (Human) protein is Basic immunoglobulin-like variable motif-containing protein (BIVM).